A 455-amino-acid chain; its full sequence is 1,4-beta-D-glucan cellobiohydrolase C (455 aa).

An N-terminal signal peptide occupies residues 1-19; the sequence is MHYSASGLALAFLLPAIQA. The region spanning 20 to 55 is the CBM1 domain; it reads QQTLYGQCGGSGWTGATSCVAGAACSTLNQWYAQCL. Intrachain disulfides connect Cys27–Cys44 and Cys38–Cys54. Residues 59 to 92 form a thr-rich linker region; that stretch reads TTTSTTLTTTTSSVTTTSNPGSTTTTSSVTVTAT. Positions 66–86 are disordered; it reads TTTTSSVTTTSNPGSTTTTSS. The segment at 93 to 450 is catalytic; it reads ASGNPFSGYQ…QAYFVQLLQN (358 aa). Residue Asp185 is part of the active site. 2 cysteine pairs are disulfide-bonded: Cys186/Cys245 and Cys377/Cys424. Asp231 (proton donor) is an active-site residue. Asp410 (nucleophile) is an active-site residue.

This sequence belongs to the glycosyl hydrolase 6 (cellulase B) family.

It localises to the secreted. The catalysed reaction is Hydrolysis of (1-&gt;4)-beta-D-glucosidic linkages in cellulose and cellotetraose, releasing cellobiose from the non-reducing ends of the chains.. Functionally, the biological conversion of cellulose to glucose generally requires three types of hydrolytic enzymes: (1) Endoglucanases which cut internal beta-1,4-glucosidic bonds; (2) Exocellobiohydrolases that cut the disaccharide cellobiose from the non-reducing end of the cellulose polymer chain; (3) Beta-1,4-glucosidases which hydrolyze the cellobiose and other short cello-oligosaccharides to glucose. Active against carboxymethylcellulose, beta-glucan and lichenan. The chain is 1,4-beta-D-glucan cellobiohydrolase C (cbhC) from Emericella nidulans (strain FGSC A4 / ATCC 38163 / CBS 112.46 / NRRL 194 / M139) (Aspergillus nidulans).